A 585-amino-acid polypeptide reads, in one-letter code: Glutamate decarboxylase 2 (585 aa).

The tract at residues 1 to 25 (MASPGSGFWSFGSEDGSGDPENPGT) is disordered. Phosphoserine occurs at positions 3, 6, 10, 13, and 17. S-palmitoyl cysteine attachment occurs at residues cysteine 30 and cysteine 45. 181–183 (QLS) serves as a coordination point for substrate. Lysine 396 carries the N6-(pyridoxal phosphate)lysine modification. A substrate-binding site is contributed by arginine 558.

The protein belongs to the group II decarboxylase family. In terms of assembly, homodimer. Requires pyridoxal 5'-phosphate as cofactor. The N-terminus is blocked. Post-translationally, phosphorylated; which does not affect kinetic parameters or subcellular location. In terms of processing, palmitoylated; which is required for presynaptic clustering.

The protein resides in the cytoplasm. It localises to the cytosol. The protein localises to the cytoplasmic vesicle. It is found in the presynaptic cell membrane. Its subcellular location is the golgi apparatus membrane. The enzyme catalyses L-glutamate + H(+) = 4-aminobutanoate + CO2. Catalyzes the production of GABA. The protein is Glutamate decarboxylase 2 (Gad2) of Rattus norvegicus (Rat).